Consider the following 446-residue polypeptide: 3-phosphoshikimate 1-carboxyvinyltransferase (446 aa).

The 3-phosphoshikimate site is built by Lys-21, Ser-22, and Arg-26. Lys-21 contributes to the phosphoenolpyruvate binding site. The phosphoenolpyruvate site is built by Gly-94 and Arg-122. The 3-phosphoshikimate site is built by Ser-167, Gln-169, Asp-315, and Lys-342. Residue Gln-169 coordinates phosphoenolpyruvate. Catalysis depends on Asp-315, which acts as the Proton acceptor. 2 residues coordinate phosphoenolpyruvate: Arg-346 and Arg-388.

It belongs to the EPSP synthase family. Monomer.

It localises to the cytoplasm. The catalysed reaction is 3-phosphoshikimate + phosphoenolpyruvate = 5-O-(1-carboxyvinyl)-3-phosphoshikimate + phosphate. It participates in metabolic intermediate biosynthesis; chorismate biosynthesis; chorismate from D-erythrose 4-phosphate and phosphoenolpyruvate: step 6/7. Its function is as follows. Catalyzes the transfer of the enolpyruvyl moiety of phosphoenolpyruvate (PEP) to the 5-hydroxyl of shikimate-3-phosphate (S3P) to produce enolpyruvyl shikimate-3-phosphate and inorganic phosphate. In Alkalilimnicola ehrlichii (strain ATCC BAA-1101 / DSM 17681 / MLHE-1), this protein is 3-phosphoshikimate 1-carboxyvinyltransferase.